A 90-amino-acid polypeptide reads, in one-letter code: Cell division topological specificity factor (90 aa).

This sequence belongs to the MinE family.

Functionally, prevents the cell division inhibition by proteins MinC and MinD at internal division sites while permitting inhibition at polar sites. This ensures cell division at the proper site by restricting the formation of a division septum at the midpoint of the long axis of the cell. In Bordetella avium (strain 197N), this protein is Cell division topological specificity factor.